The sequence spans 369 residues: Anhydro-N-acetylmuramic acid kinase (369 aa).

12 to 19 is a binding site for ATP; sequence GTSLDGVD.

The protein belongs to the anhydro-N-acetylmuramic acid kinase family.

It carries out the reaction 1,6-anhydro-N-acetyl-beta-muramate + ATP + H2O = N-acetyl-D-muramate 6-phosphate + ADP + H(+). Its pathway is amino-sugar metabolism; 1,6-anhydro-N-acetylmuramate degradation. The protein operates within cell wall biogenesis; peptidoglycan recycling. Catalyzes the specific phosphorylation of 1,6-anhydro-N-acetylmuramic acid (anhMurNAc) with the simultaneous cleavage of the 1,6-anhydro ring, generating MurNAc-6-P. Is required for the utilization of anhMurNAc either imported from the medium or derived from its own cell wall murein, and thus plays a role in cell wall recycling. The protein is Anhydro-N-acetylmuramic acid kinase of Shigella boydii serotype 18 (strain CDC 3083-94 / BS512).